The primary structure comprises 618 residues: 1-deoxy-D-xylulose-5-phosphate synthase (618 aa).

Residues H70 and 111–113 (GHS) contribute to the thiamine diphosphate site. Residue D142 coordinates Mg(2+). Thiamine diphosphate contacts are provided by residues 143-144 (GS), N171, Y278, and E360. N171 lines the Mg(2+) pocket.

It belongs to the transketolase family. DXPS subfamily. In terms of assembly, homodimer. Requires Mg(2+) as cofactor. It depends on thiamine diphosphate as a cofactor.

The enzyme catalyses D-glyceraldehyde 3-phosphate + pyruvate + H(+) = 1-deoxy-D-xylulose 5-phosphate + CO2. Its pathway is metabolic intermediate biosynthesis; 1-deoxy-D-xylulose 5-phosphate biosynthesis; 1-deoxy-D-xylulose 5-phosphate from D-glyceraldehyde 3-phosphate and pyruvate: step 1/1. In terms of biological role, catalyzes the acyloin condensation reaction between C atoms 2 and 3 of pyruvate and glyceraldehyde 3-phosphate to yield 1-deoxy-D-xylulose-5-phosphate (DXP). The protein is 1-deoxy-D-xylulose-5-phosphate synthase of Helicobacter pylori (strain J99 / ATCC 700824) (Campylobacter pylori J99).